We begin with the raw amino-acid sequence, 226 residues long: UPF0758 protein M28_Spy0816 (226 aa).

The MPN domain maps to 103-225; the sequence is SVLTSVQVAE…YYSFREKSTL (123 aa). 3 residues coordinate Zn(2+): histidine 174, histidine 176, and aspartate 187. Positions 174–187 match the JAMM motif motif; it reads HNHPSGNIEPSSND.

The protein belongs to the UPF0758 family.

The polypeptide is UPF0758 protein M28_Spy0816 (Streptococcus pyogenes serotype M28 (strain MGAS6180)).